A 169-amino-acid chain; its full sequence is Nucleoside-triphosphatase THEP1 (169 aa).

ATP contacts are provided by residues 11–18 and 100–107; these read GEPGVGKT and IIGIDEIG.

This sequence belongs to the THEP1 NTPase family.

It carries out the reaction a ribonucleoside 5'-triphosphate + H2O = a ribonucleoside 5'-diphosphate + phosphate + H(+). Functionally, has nucleotide phosphatase activity towards ATP, GTP, CTP, TTP and UTP. May hydrolyze nucleoside diphosphates with lower efficiency. The sequence is that of Nucleoside-triphosphatase THEP1 from Sulfurisphaera tokodaii (strain DSM 16993 / JCM 10545 / NBRC 100140 / 7) (Sulfolobus tokodaii).